Consider the following 220-residue polypeptide: Acetate CoA-transferase subunit alpha (220 aa).

24–30 (GGFMGIG) provides a ligand contact to CoA.

This sequence belongs to the 3-oxoacid CoA-transferase subunit A family. In terms of assembly, heterotetramer composed of two alpha subunits (AtoD) and two beta subunits (AtoA).

Its subcellular location is the cytoplasm. It catalyses the reaction an acyl-CoA + acetate = a carboxylate + acetyl-CoA. It carries out the reaction acetoacetate + acetyl-CoA = acetoacetyl-CoA + acetate. The catalysed reaction is butanoate + acetyl-CoA = butanoyl-CoA + acetate. The enzyme catalyses acetoacetate + butanoyl-CoA = acetoacetyl-CoA + butanoate. It functions in the pathway lipid metabolism; short-chain fatty acid metabolism. Inhibited by p-chloromercuribenzoate. Coenzyme A transferase which is involved in short-chain fatty acid degradation and catalyzes the activation of short-chain fatty acids to their respective CoA thiolesters. During acetoacetate degradation, catalyzes the transfer of CoA from acetyl-CoA to acetoacetate by a mechanism involving a covalent enzyme-CoA compound as a reaction intermediate. Utilizes a variety of short chain acyl-CoA and carboxylic acid substrates but exhibits maximal activity with normal and 3-keto substrates. The sequence is that of Acetate CoA-transferase subunit alpha from Escherichia coli (strain K12).